The chain runs to 188 residues: MKASEMKKGSIVEYSNGTYQIRDIQRSSPQGRGGNVRFRFVMYSVPGGSKLEASFDADEMLTAVELLRREASFSYKDGEAFVFLDEEDYTLYTLDAEAIGDNAGYISEGLSGCYVQLIDASPVALQLPQHVVLEVVDTPPELKGGTATKRPKPAKLITGIEVMVPEYITTGERILVNTTTGAFGGRAS.

It belongs to the elongation factor P family.

The protein is Elongation factor P-like protein of Xylella fastidiosa (strain M23).